Reading from the N-terminus, the 141-residue chain is Transcriptional regulator MraZ (141 aa).

SpoVT-AbrB domains follow at residues 5 to 47 and 76 to 119; these read EFEH…PAER and AAEC…GAEH.

It belongs to the MraZ family. As to quaternary structure, forms oligomers.

The protein resides in the cytoplasm. It localises to the nucleoid. This is Transcriptional regulator MraZ from Lactiplantibacillus plantarum (strain ATCC BAA-793 / NCIMB 8826 / WCFS1) (Lactobacillus plantarum).